The sequence spans 313 residues: B3 domain-containing transcription factor FUS3 (313 aa).

The TF-B3 DNA-binding region spans 92–194 (FQKELKNSDV…NYVIQARKAS (103 aa)).

As to quaternary structure, interacts with KIN10. Phosphorylation by KIN10 increases its stability. Phosphorylated at one or more of the Ser-55, Ser-56 and/or Ser-57 residues. In terms of tissue distribution, expressed in cotyledons and hypocotyls.

It localises to the nucleus. Phosphorylation by KIN10 is required to positively regulates embryogenesis, seed yield, and plant growth at high temperature. Its function is as follows. Transcription regulator involved in gene regulation during late embryogenesis. Its expression to the epidermis is sufficient to control foliar organ identity by regulating positively the synthesis abscisic acid (ABA) and negatively gibberellin production. Negatively regulates TTG1 in the embryo. Positively regulates the abundance of the ABI3 protein in the seed. Cooperates with KIN10 to regulate developmental phase transitions and lateral organ development and act both as positive regulators of abscisic acid (ABA) signaling during germination. This is B3 domain-containing transcription factor FUS3 (FUS3) from Arabidopsis thaliana (Mouse-ear cress).